A 534-amino-acid polypeptide reads, in one-letter code: Ethanolamine kinase (534 aa).

Position 23 is a phosphoserine (S23).

Belongs to the choline/ethanolamine kinase family.

The protein resides in the cytoplasm. The catalysed reaction is ethanolamine + ATP = phosphoethanolamine + ADP + H(+). It carries out the reaction choline + ATP = phosphocholine + ADP + H(+). Its pathway is phospholipid metabolism; phosphatidylethanolamine biosynthesis; phosphatidylethanolamine from ethanolamine: step 1/3. In terms of biological role, catalyzes the committed step of phosphatidylethanolamine synthesis via the CDP-ethanolamine branch of the Kennedy pathway. Also exhibits choline kinase activity, thus contributing to phosphatidylcholine synthesis via the CDP-choline pathway, but its preferred substrate is ethanolamine. The sequence is that of Ethanolamine kinase (EKI1) from Saccharomyces cerevisiae (strain ATCC 204508 / S288c) (Baker's yeast).